Reading from the N-terminus, the 209-residue chain is Orotate phosphoribosyltransferase (209 aa).

Residues Arg-96, Lys-100, His-102, and 122–130 contribute to the 5-phospho-alpha-D-ribose 1-diphosphate site; that span reads EDLISTGGS. Ser-126 lines the orotate pocket.

This sequence belongs to the purine/pyrimidine phosphoribosyltransferase family. PyrE subfamily. In terms of assembly, homodimer. It depends on Mg(2+) as a cofactor.

It catalyses the reaction orotidine 5'-phosphate + diphosphate = orotate + 5-phospho-alpha-D-ribose 1-diphosphate. It participates in pyrimidine metabolism; UMP biosynthesis via de novo pathway; UMP from orotate: step 1/2. Its function is as follows. Catalyzes the transfer of a ribosyl phosphate group from 5-phosphoribose 1-diphosphate to orotate, leading to the formation of orotidine monophosphate (OMP). The sequence is that of Orotate phosphoribosyltransferase from Streptococcus pyogenes serotype M12 (strain MGAS2096).